The primary structure comprises 121 residues: Large ribosomal subunit protein bL12 (121 aa).

It belongs to the bacterial ribosomal protein bL12 family. Homodimer. Part of the ribosomal stalk of the 50S ribosomal subunit. Forms a multimeric L10(L12)X complex, where L10 forms an elongated spine to which 2 to 4 L12 dimers bind in a sequential fashion. Binds GTP-bound translation factors.

In terms of biological role, forms part of the ribosomal stalk which helps the ribosome interact with GTP-bound translation factors. Is thus essential for accurate translation. The polypeptide is Large ribosomal subunit protein bL12 (Escherichia coli O81 (strain ED1a)).